An 85-amino-acid polypeptide reads, in one-letter code: Platelet factor 4 (85 aa).

2 disulfides stabilise this stretch: C25–C51 and C27–C67. Position 41 is a phosphoserine (S41). K76–L82 is a binding site for heparin.

This sequence belongs to the intercrine alpha (chemokine CxC) family. In terms of assembly, homotetramer. Interacts with TNFAIP6 (via Link domain). Interacts with CCR1. Interacts with CXCR3. Interacts with THBD; this interaction enhances generation of activated protein C.

It localises to the secreted. In terms of biological role, chemokine released during platelet aggregation that plays a role in different biological processes including hematopoiesis, cell proliferation, differentiation, and activation. Acts via different functional receptors including CCR1, CXCR3A or CXCR3B. Upon interaction with CXCR3A receptor, induces activated T-lymphocytes migration mediated via downstream Ras/extracellular signal-regulated kinase (ERK) signaling. Neutralizes the anticoagulant effect of heparin by binding more strongly to heparin than to the chondroitin-4-sulfate chains of the carrier molecule. Plays a role in the inhibition of hematopoiesis and in the maintenance of hematopoietic stem cell (HSC) quiescence. Chemotactic for neutrophils and monocytes via CCR1. Inhibits endothelial cell proliferation. In cooperation with toll-like receptor 8/TLR8, induces chromatin remodeling and activates inflammatory gene expression via the TBK1-IRF5 axis. In addition, induces myofibroblast differentiation and collagen synthesis in different precursor cells, including endothelial cells, by stimulating endothelial-to-mesenchymal transition. Interacts with thrombomodulin/THBD to enhance the activation of protein C and thus potentiates its anticoagulant activity. This Ovis aries (Sheep) protein is Platelet factor 4 (PF4).